The sequence spans 449 residues: MAQFYSPNRRVTTRKAIPAKNLTVTVTSLDPFGQGVARHEGKTVFVTGVLPGEQAEVQLTEDKRQFSHAKLKRLLTHSPQRVEPQCPHFTRCGGCQQQHADITLQQSSKTAALMRLMTRETGAELPDASLIAGTPYAYRRRARLALYFQAKEQRLLMGYRQSNSHDLVDIKACPVLRPELEALLQPLRDCLSRLKAVKRLGHVELVQAENGPLLVLRHLDPLHPADEQALRDFAEQQGVSVYLAPDADSLTCLHGDEPVYLVAGLTLAFSPRDFIQVNDAVNQQMVAQALAWLDVQPQDRILDLFCGMGNFTLPLAQRAASVVGVEGVTALVEKGRENARRNALSNVTFFHQNLEDDVTQQPWVAQGFDKILLDPARAGAAGVMEQITRLAPKRVVYVSCNATTLARDSKVLLAAGFTLVNVAMLDMFPHTGHLESMALFLHDTGTRKA.

The TRAM domain maps to 15 to 73; sequence KAIPAKNLTVTVTSLDPFGQGVARHEGKTVFVTGVLPGEQAEVQLTEDKRQFSHAKLKR. Cysteine 86, cysteine 92, cysteine 95, and cysteine 173 together coordinate [4Fe-4S] cluster. The S-adenosyl-L-methionine site is built by glutamine 276, phenylalanine 305, asparagine 310, glutamate 326, asparagine 353, and aspartate 374. The active-site Nucleophile is the cysteine 400.

This sequence belongs to the class I-like SAM-binding methyltransferase superfamily. RNA M5U methyltransferase family. RlmD subfamily.

It catalyses the reaction uridine(1939) in 23S rRNA + S-adenosyl-L-methionine = 5-methyluridine(1939) in 23S rRNA + S-adenosyl-L-homocysteine + H(+). Catalyzes the formation of 5-methyl-uridine at position 1939 (m5U1939) in 23S rRNA. In Pectobacterium carotovorum subsp. carotovorum (strain PC1), this protein is 23S rRNA (uracil(1939)-C(5))-methyltransferase RlmD.